A 118-amino-acid polypeptide reads, in one-letter code: Large ribosomal subunit protein uL24 (118 aa).

This sequence belongs to the universal ribosomal protein uL24 family. As to quaternary structure, part of the 50S ribosomal subunit.

Functionally, one of two assembly initiator proteins, it binds directly to the 5'-end of the 23S rRNA, where it nucleates assembly of the 50S subunit. One of the proteins that surrounds the polypeptide exit tunnel on the outside of the subunit. The protein is Large ribosomal subunit protein uL24 of Synechococcus sp. (strain WH7803).